A 222-amino-acid chain; its full sequence is Lipid A 4'-phosphatase (222 aa).

Topologically, residues 1 to 3 are cytoplasmic; the sequence is MAR. The chain crosses the membrane as a helical span at residues 4–24; that stretch reads FHIILGLVVCFFAWIFFLIFP. Residues 25–58 lie on the Periplasmic side of the membrane; it reads NLDIQFAGHFYNSSAHQFIGGYDGFLGFLHWFAR. A helical transmembrane segment spans residues 59 to 79; sequence FFPIFFSIIVILFLLGSLFID. Topologically, residues 80-87 are cytoplasmic; that stretch reads KFKIKYRK. Residues 88–108 form a helical membrane-spanning segment; it reads AIFFIAVCLWIGPGLVVNYVF. Residues 109–144 lie on the Periplasmic side of the membrane; sequence KDHWGRPRPVMVEQFNGDKIFQPPFVISSQCDKNCS. The helical transmembrane segment at 145–165 threads the bilayer; the sequence is FVCGDASMGFWLFAFMPLLAT. The Cytoplasmic segment spans residues 166–169; it reads RKKK. A helical membrane pass occupies residues 170–190; that stretch reads LVAFIAAVVAGGGLGLMRMSQ. Residues 191-193 are Periplasmic-facing; the sequence is GGH. The chain crosses the membrane as a helical span at residues 194 to 214; the sequence is FFSDVVFCGIFVYISTWVVYA. The Cytoplasmic segment spans residues 215–222; the sequence is LMYRKKEY.

The protein belongs to the lipid A LpxF 4'-phosphatase family.

Its subcellular location is the cell inner membrane. Its pathway is bacterial outer membrane biogenesis; LPS lipid A biosynthesis. Functionally, removes the 4'-phosphate moiety from lipid IV(A) (a tetraacylated precursor of lipid A) and from pentaacylated lipid A, but not from hexaacylated lipid A (as is found in E.coli). Does not dephosphorylate phosphatidic acid, phosphatidylglycerophosphate, or the 1-phosphate group of lipid A and lipid A precursors. Its expression in E.coli confers resistance to the cationic antimicrobial peptide (CAMP) polymyxin B. Plays a critical role in the ability of the bacteria to avoid the host's innate immune system, especially the bactericidal action of CAMPs, although whether it is CAMP-sensitivity or increased sensitivity to the immune system is not clear. This Francisella tularensis subsp. novicida (strain U112) protein is Lipid A 4'-phosphatase.